Here is a 328-residue protein sequence, read N- to C-terminus: Phosphate acyltransferase (328 aa).

It belongs to the PlsX family. In terms of assembly, homodimer. Probably interacts with PlsY.

It is found in the cytoplasm. It carries out the reaction a fatty acyl-[ACP] + phosphate = an acyl phosphate + holo-[ACP]. It functions in the pathway lipid metabolism; phospholipid metabolism. Functionally, catalyzes the reversible formation of acyl-phosphate (acyl-PO(4)) from acyl-[acyl-carrier-protein] (acyl-ACP). This enzyme utilizes acyl-ACP as fatty acyl donor, but not acyl-CoA. The chain is Phosphate acyltransferase from Staphylococcus aureus (strain MSSA476).